The chain runs to 278 residues: Soluble NSF attachment protein homolog FPV011 (278 aa).

Belongs to the SNAP family.

The protein is Soluble NSF attachment protein homolog FPV011 of Fowlpox virus (strain NVSL) (FPV).